We begin with the raw amino-acid sequence, 693 residues long: Elongation factor G (693 aa).

Positions 8 to 284 (DMTRNVGIMA…AIVNYMPAPT (277 aa)) constitute a tr-type G domain. Residues 17 to 24 (AHIDAGKT), 81 to 85 (DTPGH), and 135 to 138 (NKMD) contribute to the GTP site.

This sequence belongs to the TRAFAC class translation factor GTPase superfamily. Classic translation factor GTPase family. EF-G/EF-2 subfamily.

It is found in the cytoplasm. In terms of biological role, catalyzes the GTP-dependent ribosomal translocation step during translation elongation. During this step, the ribosome changes from the pre-translocational (PRE) to the post-translocational (POST) state as the newly formed A-site-bound peptidyl-tRNA and P-site-bound deacylated tRNA move to the P and E sites, respectively. Catalyzes the coordinated movement of the two tRNA molecules, the mRNA and conformational changes in the ribosome. The sequence is that of Elongation factor G from Fusobacterium nucleatum subsp. nucleatum (strain ATCC 25586 / DSM 15643 / BCRC 10681 / CIP 101130 / JCM 8532 / KCTC 2640 / LMG 13131 / VPI 4355).